The sequence spans 359 residues: Decorin (359 aa).

The N-terminal stretch at 1 to 16 is a signal peptide; that stretch reads MKATIILLLLAQVSWA. A propeptide spanning residues 17 to 30 is cleaved from the precursor; sequence GPFQQRGLFDFMLE. O-linked (Xyl...) (glycosaminoglycan) serine glycosylation occurs at Ser34. 2 disulfides stabilise this stretch: Cys54/Cys60 and Cys58/Cys67. LRR repeat units follow at residues 73–93, 94–117, 118–141, 142–162, 163–186, 187–212, 213–233, 234–257, 258–281, 282–304, 305–334, and 335–359; these read DKVP…NNKI, TEIK…NNKI, SKVS…KNQL, KELP…ENEI, TKVR…TNPL, KSSG…DTNI, TSIP…GNKI, SRVD…FNSI, SAVD…NNKL, TRVP…NNNI, SVVG…SNPV, and QYWE…GNYK. A glycan (N-linked (GlcNAc...) asparagine) is linked at Asn211. N-linked (GlcNAc...) asparagine glycans are attached at residues Asn262 and Asn303. An intrachain disulfide couples Cys313 to Cys346.

Belongs to the small leucine-rich proteoglycan (SLRP) family. SLRP class I subfamily. As to quaternary structure, binds to type I and type II collagen, fibronectin and TGF-beta. Forms a ternary complex with MFAP2 and ELN. Interacts with DPT. The attached glycosaminoglycan chain can be either chondroitin sulfate or dermatan sulfate depending upon the tissue of origin. Detected in placenta (at protein level). Detected in cerebrospinal fluid, fibroblasts and urine (at protein level).

It is found in the secreted. It localises to the extracellular space. The protein localises to the extracellular matrix. Its function is as follows. May affect the rate of fibrils formation. The polypeptide is Decorin (DCN) (Homo sapiens (Human)).